Reading from the N-terminus, the 509-residue chain is ATP synthase subunit alpha (509 aa).

Gly169–Thr176 serves as a coordination point for ATP.

The protein belongs to the ATPase alpha/beta chains family. In terms of assembly, F-type ATPases have 2 components, CF(1) - the catalytic core - and CF(0) - the membrane proton channel. CF(1) has five subunits: alpha(3), beta(3), gamma(1), delta(1), epsilon(1). CF(0) has three main subunits: a(1), b(2) and c(9-12). The alpha and beta chains form an alternating ring which encloses part of the gamma chain. CF(1) is attached to CF(0) by a central stalk formed by the gamma and epsilon chains, while a peripheral stalk is formed by the delta and b chains.

It localises to the cell inner membrane. The catalysed reaction is ATP + H2O + 4 H(+)(in) = ADP + phosphate + 5 H(+)(out). In terms of biological role, produces ATP from ADP in the presence of a proton gradient across the membrane. The alpha chain is a regulatory subunit. The polypeptide is ATP synthase subunit alpha (Rhizobium johnstonii (strain DSM 114642 / LMG 32736 / 3841) (Rhizobium leguminosarum bv. viciae)).